Consider the following 562-residue polypeptide: Sperm-tail PG-rich repeat-containing protein 2 (562 aa).

STPGR repeat units lie at residues 21 to 31 (GPGTYNINRSL), 60 to 73 (SPGPGQYNSDITRN), and 96 to 118 (PGPGAYNVTNDVSPARKIKAKSP). Disordered regions lie at residues 114 to 136 (KAKSPKITSKAVRPSLSPAAPSI) and 192 to 215 (SGRREPLKGADEPGPGHYELQEDQ). Positions 127-136 (PSLSPAAPSI) are enriched in low complexity. The segment covering 193–202 (GRREPLKGAD) has biased composition (basic and acidic residues). STPGR repeat units follow at residues 204–227 (PGPGHYELQEDQTVQYENVNVKRE), 253–271 (PGPGQYYIKSQFETSSNTH), 336–350 (TPGPGAYNMFGYGLA), 385–409 (TPGPTQYKVEKTNEALYKKQSTAAF), 425–462 (TPPPGSYNVSQSFEKTQCLHQYSKPRNENARKRQSCFL), and 478–492 (TPGPAYYSPDVKSSS). The disordered stretch occupies residues 543–562 (STRSLSSHRSWRKPTAHSSA). The segment covering 551 to 562 (RSWRKPTAHSSA) has biased composition (basic residues).

The protein is Sperm-tail PG-rich repeat-containing protein 2 (stpg2) of Danio rerio (Zebrafish).